Here is a 163-residue protein sequence, read N- to C-terminus: Lipoprotein signal peptidase (163 aa).

Transmembrane regions (helical) follow at residues 4–24, 66–86, and 92–112; these read SAAL…LLIL, LDAW…AWLW, and DHQF…GNII. Active-site residues include Asp122 and Asp140. The helical transmembrane segment at 132–152 threads the bilayer; that stretch reads SFAVFNLADSLITIGAGFILL.

Belongs to the peptidase A8 family.

It is found in the cell inner membrane. The enzyme catalyses Release of signal peptides from bacterial membrane prolipoproteins. Hydrolyzes -Xaa-Yaa-Zaa-|-(S,diacylglyceryl)Cys-, in which Xaa is hydrophobic (preferably Leu), and Yaa (Ala or Ser) and Zaa (Gly or Ala) have small, neutral side chains.. It functions in the pathway protein modification; lipoprotein biosynthesis (signal peptide cleavage). This protein specifically catalyzes the removal of signal peptides from prolipoproteins. The protein is Lipoprotein signal peptidase of Allorhizobium ampelinum (strain ATCC BAA-846 / DSM 112012 / S4) (Agrobacterium vitis (strain S4)).